A 257-amino-acid polypeptide reads, in one-letter code: uncharacterized protein (257 aa).

Residues 6-26 form a helical membrane-spanning segment; it reads IFWLNLAAIIIISIVVSGGMF.

The protein belongs to the staphylococcal tandem lipoprotein family.

Its subcellular location is the cell membrane. This is an uncharacterized protein from Staphylococcus aureus (strain MSSA476).